Here is a 108-residue protein sequence, read N- to C-terminus: Protein Asterix (108 aa).

A disordered region spans residues 1 to 29 (MNMTVDPRRKEKINRYKAPKNQGQSGGAN). Residues 80–96 (VLSSFMLSVSAVVMSYL) traverse the membrane as a helical segment.

The protein belongs to the Asterix family.

It is found in the membrane. This is Protein Asterix from Drosophila melanogaster (Fruit fly).